We begin with the raw amino-acid sequence, 206 residues long: uncharacterized protein (206 aa).

The tract at residues 128–206 (KRYNVQKPKV…DQSWLDELLR (79 aa)) is disordered. Residues 171–181 (YISSNHSSMHI) show a composition bias toward polar residues.

It localises to the cytoplasm. The protein resides in the nucleus. This is an uncharacterized protein from Schizosaccharomyces pombe (strain 972 / ATCC 24843) (Fission yeast).